The sequence spans 499 residues: uncharacterized protein (499 aa).

2 disordered regions span residues 76–118 (QATA…RLSP) and 208–268 (DFET…DWAN). Residues 87–104 (DPEKQTGKSRYHPSEEIR) show a composition bias toward basic and acidic residues. A compositionally biased stretch (acidic residues) spans 208-263 (DFETEDDESGDDDSEDTGEDEDEEEWVAILEDEDEDDDDDDDDDEDDDDSDSDESL). Serine 355 carries the phosphoserine modification. Residues 478 to 499 (AEGQIRKLLFPKTNQSTQPKPK) form a disordered region. Over residues 489–499 (KTNQSTQPKPK) the composition is skewed to polar residues.

This is an uncharacterized protein from Arabidopsis thaliana (Mouse-ear cress).